The sequence spans 239 residues: Uridylate kinase (239 aa).

Position 12-15 (12-15 (KLSG)) interacts with ATP. Gly-53 lines the UMP pocket. The ATP site is built by Gly-54 and Arg-58. Residues Asp-73 and 135-142 (TGSPCFTT) contribute to the UMP site. ATP-binding residues include Thr-162, Tyr-168, and Asp-171.

It belongs to the UMP kinase family. As to quaternary structure, homohexamer.

Its subcellular location is the cytoplasm. The enzyme catalyses UMP + ATP = UDP + ADP. The protein operates within pyrimidine metabolism; CTP biosynthesis via de novo pathway; UDP from UMP (UMPK route): step 1/1. With respect to regulation, inhibited by UTP. Catalyzes the reversible phosphorylation of UMP to UDP. This Ruthia magnifica subsp. Calyptogena magnifica protein is Uridylate kinase.